Reading from the N-terminus, the 1003-residue chain is Translation initiation factor IF-2 (1003 aa).

Residues 36–392 (SSTIEPPVVK…RQKRNEYESM (357 aa)) form a disordered region. Over residues 62–151 (AAKPAAAKPA…PKPAAAAKPA (90 aa)) the composition is skewed to low complexity. Pro residues-rich tracts occupy residues 178–190 (DGMPRPMGKPAPK) and 213–230 (PRPGGGPRPGGGPRPGGG). 2 stretches are compositionally biased toward gly residues: residues 231–243 (PRPQGQGRPGGQR) and 255–271 (GNRGGQRQGAGAGGPRP). The span at 273–286 (GGPRPQGGSRPQGG) shows a compositional bias: low complexity. The segment covering 329–372 (GKGGRGGQAGGGAGGGFNRGGGTGGGAGRGGRRGGTAGAFGRPG) has biased composition (gly residues). The segment covering 376 to 385 (RRGRKSKRQK) has biased composition (basic residues). The tr-type G domain maps to 498 to 670 (KRPPVVTVMG…VCLTADAELD (173 aa)). The tract at residues 507-514 (GHVDHGKT) is G1. Position 507 to 514 (507 to 514 (GHVDHGKT)) interacts with GTP. Residues 532 to 536 (GITQG) form a G2 region. Residues 557–560 (DTPG) are G3. GTP is bound by residues 557–561 (DTPGH) and 611–614 (NKID). The tract at residues 611-614 (NKID) is G4. Positions 647–649 (SAK) are G5.

This sequence belongs to the TRAFAC class translation factor GTPase superfamily. Classic translation factor GTPase family. IF-2 subfamily.

It is found in the cytoplasm. In terms of biological role, one of the essential components for the initiation of protein synthesis. Protects formylmethionyl-tRNA from spontaneous hydrolysis and promotes its binding to the 30S ribosomal subunits. Also involved in the hydrolysis of GTP during the formation of the 70S ribosomal complex. This is Translation initiation factor IF-2 from Corynebacterium glutamicum (strain R).